Consider the following 281-residue polypeptide: NH(3)-dependent NAD(+) synthetase (281 aa).

24–31 (GVSGGVDS) contacts ATP. Asp30 is a Mg(2+) binding site. Residue Arg145 participates in deamido-NAD(+) binding. ATP is bound at residue Thr165. Mg(2+) is bound at residue Glu170. Positions 178 and 185 each coordinate deamido-NAD(+). Residues Lys194 and Ser216 each contribute to the ATP site.

Belongs to the NAD synthetase family. Homodimer.

The enzyme catalyses deamido-NAD(+) + NH4(+) + ATP = AMP + diphosphate + NAD(+) + H(+). It participates in cofactor biosynthesis; NAD(+) biosynthesis; NAD(+) from deamido-NAD(+) (ammonia route): step 1/1. Its function is as follows. Catalyzes the ATP-dependent amidation of deamido-NAD to form NAD. Uses ammonia as a nitrogen source. In Thermotoga maritima (strain ATCC 43589 / DSM 3109 / JCM 10099 / NBRC 100826 / MSB8), this protein is NH(3)-dependent NAD(+) synthetase (nadE1).